A 325-amino-acid polypeptide reads, in one-letter code: Clavaminate synthase 2 (325 aa).

Residues histidine 145, glutamate 147, and histidine 280 each contribute to the Fe cation site. Arginine 294 is a 2-oxoglutarate binding site.

The protein belongs to the clavaminate synthase family. Requires Fe(2+) as cofactor.

It carries out the reaction deoxyamidinoproclavaminate + 2-oxoglutarate + O2 = amidinoproclavaminate + succinate + CO2. The enzyme catalyses proclavaminate + 2-oxoglutarate + O2 = dihydroclavaminate + succinate + CO2 + H2O. The catalysed reaction is dihydroclavaminate + 2-oxoglutarate + O2 = clavaminate + succinate + CO2 + H2O. It functions in the pathway antibiotic biosynthesis; clavulanate biosynthesis; clavulanate from D-glyceraldehyde 3-phosphate and L-arginine: step 3/8. It participates in antibiotic biosynthesis; clavulanate biosynthesis; clavulanate from D-glyceraldehyde 3-phosphate and L-arginine: step 5/8. The protein operates within antibiotic biosynthesis; clavulanate biosynthesis; clavulanate from D-glyceraldehyde 3-phosphate and L-arginine: step 6/8. The sequence is that of Clavaminate synthase 2 (cs2) from Streptomyces clavuligerus.